The following is a 236-amino-acid chain: MPINCKVKSIEPLACNTFRILLHPEQPVAFKAGQYLTVVMGEKDKRPFSIASSPCRHEGEIELHIGAAEHNAYAGEVVESMKSALETGGDILIDAPHGEAWIREDSDRSMLLIAGGTGFSYVRSILDHCISQQIQKPIYLYWGGRDECQLYAKAELESIAQAHSHITFVPVVEKSEGWTGKTGNVLEAVKADFNSLADMDIYIAGRFEMAGAAREQFTTEKQAKKEQLFGDAFAFI.

Residues 1–103 form the FAD-binding FR-type domain; the sequence is MPINCKVKSI…DAPHGEAWIR (103 aa). 115-119 is a binding site for pyridine; the sequence is GGTGF.

It belongs to the Fre/LuxG FAD/NAD(P) flavoprotein oxidoreductase family.

In terms of biological role, involved in bioluminescence. It is a good supplier of reduced flavin mononucleotide (FMNH2) to the bioluminescence reaction. Preferably uses riboflavin as an electron acceptor when NADPH is used as an electron donor. The polypeptide is NAD(P)H-flavin reductase (fre) (Aliivibrio fischeri (Vibrio fischeri)).